We begin with the raw amino-acid sequence, 185 residues long: Elongation factor P (185 aa).

Belongs to the elongation factor P family.

It localises to the cytoplasm. It participates in protein biosynthesis; polypeptide chain elongation. Involved in peptide bond synthesis. Stimulates efficient translation and peptide-bond synthesis on native or reconstituted 70S ribosomes in vitro. Probably functions indirectly by altering the affinity of the ribosome for aminoacyl-tRNA, thus increasing their reactivity as acceptors for peptidyl transferase. The sequence is that of Elongation factor P from Bacillus cereus (strain ATCC 10987 / NRS 248).